We begin with the raw amino-acid sequence, 147 residues long: Lysozyme C, tracheal isozyme (147 aa).

Positions Met-1–Gly-18 are cleaved as a signal peptide. A C-type lysozyme domain is found at Lys-19 to Val-147. 4 disulfides stabilise this stretch: Cys-24–Cys-145, Cys-48–Cys-133, Cys-83–Cys-99, and Cys-95–Cys-113. Active-site residues include Glu-53 and Asp-71.

Belongs to the glycosyl hydrolase 22 family. In terms of assembly, monomer. In terms of tissue distribution, trachea.

It catalyses the reaction Hydrolysis of (1-&gt;4)-beta-linkages between N-acetylmuramic acid and N-acetyl-D-glucosamine residues in a peptidoglycan and between N-acetyl-D-glucosamine residues in chitodextrins.. In terms of biological role, lysozymes have primarily a bacteriolytic function; those in tissues and body fluids are associated with the monocyte-macrophage system and enhance the activity of immunoagents. This chain is Lysozyme C, tracheal isozyme, found in Bos taurus (Bovine).